The following is a 747-amino-acid chain: UPF0313 protein PA4928 (747 aa).

One can recognise a Radical SAM core domain in the interval 371–640 (AYEMIRFSVN…KSDQQRRLHK (270 aa)). Positions 385, 389, and 392 each coordinate [4Fe-4S] cluster. The tract at residues 670–747 (GKHHLVPTYQ…KKSRQPNIPR (78 aa)) is disordered.

Belongs to the UPF0313 family. Requires [4Fe-4S] cluster as cofactor.

This chain is UPF0313 protein PA4928, found in Pseudomonas aeruginosa (strain ATCC 15692 / DSM 22644 / CIP 104116 / JCM 14847 / LMG 12228 / 1C / PRS 101 / PAO1).